Here is a 119-residue protein sequence, read N- to C-terminus: Immunoglobulin heavy variable 2-5 (119 aa).

Residues 1–19 (MDTLCSTLLLLTIPSWVLS) form the signal peptide. Q20 carries the pyrrolidone carboxylic acid modification. The tract at residues 20 to 44 (QITLKESGPTLVKPTQTLTLTCTFS) is framework-1. Residues 20–119 (QITLKESGPT…DTATYYCAHR (100 aa)) enclose the Ig-like domain. C41 and C116 are oxidised to a cystine. The complementarity-determining-1 stretch occupies residues 45 to 54 (GFSLSTSGVG). The tract at residues 55–71 (VGWIRQPPGKALEWLAL) is framework-2. Residues 72 to 78 (IYWDDDK) are complementarity-determining-2. Residues 79–116 (RYSPSLKSRLTITKDTSKNQVVLTMTNMDPVDTATYYC) are framework-3. The tract at residues 117–119 (AHR) is complementarity-determining-3.

In terms of assembly, immunoglobulins are composed of two identical heavy chains and two identical light chains; disulfide-linked.

The protein resides in the secreted. It is found in the cell membrane. Functionally, v region of the variable domain of immunoglobulin heavy chains that participates in the antigen recognition. Immunoglobulins, also known as antibodies, are membrane-bound or secreted glycoproteins produced by B lymphocytes. In the recognition phase of humoral immunity, the membrane-bound immunoglobulins serve as receptors which, upon binding of a specific antigen, trigger the clonal expansion and differentiation of B lymphocytes into immunoglobulins-secreting plasma cells. Secreted immunoglobulins mediate the effector phase of humoral immunity, which results in the elimination of bound antigens. The antigen binding site is formed by the variable domain of one heavy chain, together with that of its associated light chain. Thus, each immunoglobulin has two antigen binding sites with remarkable affinity for a particular antigen. The variable domains are assembled by a process called V-(D)-J rearrangement and can then be subjected to somatic hypermutations which, after exposure to antigen and selection, allow affinity maturation for a particular antigen. This chain is Immunoglobulin heavy variable 2-5, found in Homo sapiens (Human).